The chain runs to 319 residues: Aspartate carbamoyltransferase catalytic subunit (319 aa).

Carbamoyl phosphate is bound by residues R59 and T60. An L-aspartate-binding site is contributed by K87. Carbamoyl phosphate contacts are provided by R109, H137, and Q140. L-aspartate is bound by residues R170 and R224. 2 residues coordinate carbamoyl phosphate: G265 and P266.

Belongs to the aspartate/ornithine carbamoyltransferase superfamily. ATCase family. In terms of assembly, heterododecamer (2C3:3R2) of six catalytic PyrB chains organized as two trimers (C3), and six regulatory PyrI chains organized as three dimers (R2).

The catalysed reaction is carbamoyl phosphate + L-aspartate = N-carbamoyl-L-aspartate + phosphate + H(+). The protein operates within pyrimidine metabolism; UMP biosynthesis via de novo pathway; (S)-dihydroorotate from bicarbonate: step 2/3. In terms of biological role, catalyzes the condensation of carbamoyl phosphate and aspartate to form carbamoyl aspartate and inorganic phosphate, the committed step in the de novo pyrimidine nucleotide biosynthesis pathway. The protein is Aspartate carbamoyltransferase catalytic subunit of Gemmatimonas aurantiaca (strain DSM 14586 / JCM 11422 / NBRC 100505 / T-27).